A 352-amino-acid chain; its full sequence is Divinyl chlorophyll a/b light-harvesting protein PcbA (352 aa).

The next 6 membrane-spanning stretches (helical) occupy residues 27-47 (FIAA…AFTL), 90-110 (VLAI…GGLL), 142-162 (FILG…VEWA), 203-223 (VMGG…WHIA), 243-263 (AVLS…AFWS), and 306-326 (LANV…WHAL).

The protein belongs to the PsbB/PsbC family. IsiA/Pcb subfamily. As to quaternary structure, the antenna complex consists of divinyl chlorophylls (a and b) and divinyl chlorophyll a/b binding proteins and binds less divinyl chlorophyll b than does low-light-adapted Prochlorococcus. Also forms complexes with PSII, consisting of a PSII dimer and 4 or 8 PcbA subunits. These complexes are also found under conditions of iron-starvation. Divinyl chlorophyll a is required as a cofactor. Divinyl chlorophyll b serves as cofactor.

It is found in the cellular thylakoid membrane. Its function is as follows. The antenna complex functions as a light receptor, it captures and delivers excitation energy to photosystem II and possibly to photosystem I. The Prochlorales pcb genes are not related to higher plant LHCs. This is Divinyl chlorophyll a/b light-harvesting protein PcbA (pcbA) from Prochlorococcus marinus subsp. pastoris (strain CCMP1986 / NIES-2087 / MED4).